A 228-amino-acid polypeptide reads, in one-letter code: Translin (228 aa).

The DNA/RNA binding stretch occupies residues 86-90 (RFHEH). Residues 177–198 (LDSGFRLLNLKNDSLRKRYDGL) form a leucine-zipper region. Lys-187 carries the post-translational modification N6-acetyllysine. Ser-190 carries the phosphoserine modification. Lys-199 is modified (N6-acetyllysine).

The protein belongs to the translin family. In terms of assembly, ring-shaped heterooctamer of six TSN and two TSNAX subunits, DNA/RNA binding occurs inside the ring.

It is found in the cytoplasm. The protein localises to the nucleus. Functionally, DNA-binding protein that specifically recognizes consensus sequences at the breakpoint junctions in chromosomal translocations, mostly involving immunoglobulin (Ig)/T-cell receptor gene segments. Seems to recognize single-stranded DNA ends generated by staggered breaks occurring at recombination hot spots. Exhibits both single-stranded and double-stranded endoribonuclease activity. May act as an activator of RNA-induced silencing complex (RISC) by facilitating endonucleolytic cleavage of the siRNA passenger strand. The protein is Translin (Tsn) of Mus musculus (Mouse).